A 549-amino-acid polypeptide reads, in one-letter code: Tight junction-associated protein 1 (549 aa).

Residues Met1–Glu34 are disordered. A compositionally biased stretch (basic and acidic residues) spans Ala14–Leu23. Positions Met42–Asp171 form a coiled coil. Disordered regions lie at residues Arg207 to Gly226 and Val266 to Pro322. Phosphoserine is present on Ser295. Over residues Tyr311–Leu320 the composition is skewed to pro residues. Thr313 bears the Phosphothreonine mark. Phosphoserine is present on residues Ser315 and Ser340. 3 disordered regions span residues Glu359–Asp404, Gln410–Phe429, and Leu434–Ser549. The span at Ser369–His383 shows a compositional bias: polar residues. Over residues Pro389 to Ser400 the composition is skewed to low complexity. Residue Thr417 is modified to Phosphothreonine. A Phosphoserine modification is found at Ser483. Basic and acidic residues predominate over residues Glu485–Thr498. The span at Arg522–Arg534 shows a compositional bias: basic residues. Ser537 bears the Phosphoserine mark. The span at Leu538–Ser549 shows a compositional bias: polar residues.

Interacts with DLG1. Interacts with ARF6 (GTP-bound form). In terms of tissue distribution, widely expressed including in adult thymus, heart, lung, liver, small intestine, kidney, spleen, testis and skeletal muscle and in embryonic brain but not detected in adult brain (at protein level).

The protein localises to the golgi apparatus. Its subcellular location is the trans-Golgi network. It is found in the cell junction. The protein resides in the tight junction. It localises to the cell membrane. Functionally, plays a role in regulating the structure of the Golgi apparatus. In Mus musculus (Mouse), this protein is Tight junction-associated protein 1.